The following is a 493-amino-acid chain: Proline--tRNA ligase (493 aa).

The protein belongs to the class-II aminoacyl-tRNA synthetase family. ProS type 3 subfamily. In terms of assembly, homodimer.

The protein localises to the cytoplasm. It catalyses the reaction tRNA(Pro) + L-proline + ATP = L-prolyl-tRNA(Pro) + AMP + diphosphate. Catalyzes the attachment of proline to tRNA(Pro) in a two-step reaction: proline is first activated by ATP to form Pro-AMP and then transferred to the acceptor end of tRNA(Pro). The sequence is that of Proline--tRNA ligase from Parabacteroides distasonis (strain ATCC 8503 / DSM 20701 / CIP 104284 / JCM 5825 / NCTC 11152).